The following is a 432-amino-acid chain: Transcobalamin-2 (432 aa).

The signal sequence occupies residues 1-18 (MGHLGALLFLLGGLGALA). Disulfide bonds link Cys21–Cys270, Cys116–Cys312, and Cys165–Cys208. N-linked (GlcNAc...) asparagine glycosylation is present at Asn94. Cob(II)alamin contacts are provided by residues Gln104, 152–156 (TSYYQ), His193, 193–197 (HVSVD), Asn245, Ser248, Gln294, and 400–402 (WQV).

It belongs to the eukaryotic cobalamin transport proteins family. Interacts with CD320 (via LDL-receptor class A domains). In terms of tissue distribution, expressed in mammary gland, kidney, lymphatic nodes and liver.

The protein localises to the secreted. Its function is as follows. Primary vitamin B12-binding and transport protein. Delivers cobalamin to cells. The sequence is that of Transcobalamin-2 (TCN2) from Bos taurus (Bovine).